The primary structure comprises 69 residues: uncharacterized protein (69 aa).

4Fe-4S ferredoxin-type domains follow at residues 2–30 (KIEI…KSKK) and 38–67 (PPIP…IELS). [4Fe-4S] cluster is bound by residues Cys10, Cys13, Cys16, Cys20, Cys47, Cys50, Cys53, and Cys57.

It depends on [4Fe-4S] cluster as a cofactor.

This is an uncharacterized protein from Methanocaldococcus jannaschii (strain ATCC 43067 / DSM 2661 / JAL-1 / JCM 10045 / NBRC 100440) (Methanococcus jannaschii).